Reading from the N-terminus, the 77-residue chain is DNA-directed RNA polymerase subunit Rpo5 (77 aa).

It belongs to the archaeal Rpo5/eukaryotic RPB5 RNA polymerase subunit family. As to quaternary structure, part of the RNA polymerase complex.

The protein resides in the cytoplasm. The enzyme catalyses RNA(n) + a ribonucleoside 5'-triphosphate = RNA(n+1) + diphosphate. In terms of biological role, DNA-dependent RNA polymerase (RNAP) catalyzes the transcription of DNA into RNA using the four ribonucleoside triphosphates as substrates. The protein is DNA-directed RNA polymerase subunit Rpo5 of Methanothermobacter thermautotrophicus (strain ATCC 29096 / DSM 1053 / JCM 10044 / NBRC 100330 / Delta H) (Methanobacterium thermoautotrophicum).